Here is a 321-residue protein sequence, read N- to C-terminus: Inner membrane protein YtfF (321 aa).

The Cytoplasmic portion of the chain corresponds to 1 to 4; that stretch reads MISG. Residues 5-25 form a helical membrane-spanning segment; sequence VLYALLAGLMWGLIFVGPLIV. The EamA domain maps to 13–141; it reads LMWGLIFVGP…IGIGLACVNI (129 aa). Topologically, residues 26–30 are periplasmic; that stretch reads PEYPA. A helical transmembrane segment spans residues 31–51; it reads MLQSMGRYLALGLIALPIAWL. Residues 52–65 are Cytoplasmic-facing; sequence GRVRLRQLARRDWL. The helical transmembrane segment at 66-86 threads the bilayer; it reads TALMLTMMGNLIYYFCLASAI. Residues 87–92 are Periplasmic-facing; that stretch reads QRTGAP. Residues 93–113 traverse the membrane as a helical segment; the sequence is VSTMIIGTLPVVIPVFANLLY. Residues 114–120 are Cytoplasmic-facing; sequence SQRDGKL. The chain crosses the membrane as a helical span at residues 121–141; sequence AWGKLAPALICIGIGLACVNI. Residues 142–154 are Periplasmic-facing; the sequence is AELNHGLPDFDWA. The helical transmembrane segment at 155 to 175 threads the bilayer; that stretch reads RYTSGIVLALVSVVCWAWYAL. Residues 176–194 lie on the Cytoplasmic side of the membrane; the sequence is RNARWLRENPDKHPMMWAT. The helical transmembrane segment at 195 to 215 threads the bilayer; it reads AQALVTLPVSLIGYLVACYWL. Residues 216-230 are Periplasmic-facing; that stretch reads NTQTPDFSLPFGPRP. The chain crosses the membrane as a helical span at residues 231–251; the sequence is LVFISLMVAIAVLCSWVGALC. Topologically, residues 252–261 are cytoplasmic; sequence WNVASQLLPT. The helical transmembrane segment at 262–282 threads the bilayer; the sequence is VILGPLIVFETLAGLLYTFLL. At 283-285 the chain is on the periplasmic side; sequence RQQ. Residues 286–306 traverse the membrane as a helical segment; that stretch reads MPPLMTLSGIALLVIGVVIAV. Over 307 to 321 the chain is Cytoplasmic; sequence RAKPEKPLTESVSES.

It is found in the cell inner membrane. The protein is Inner membrane protein YtfF (ytfF) of Escherichia coli (strain K12).